A 350-amino-acid chain; its full sequence is Glycolate oxidase subunit GlcE (350 aa).

Residues 1 to 173 (MLRECDYSQA…TEISMKVLPR (173 aa)) form the FAD-binding PCMH-type domain.

The glycolate oxidase likely consists of three subunits, GlcD, GlcE and GlcF. FAD serves as cofactor.

The protein resides in the cell inner membrane. It catalyses the reaction glycolate + A = glyoxylate + AH2. The enzyme catalyses (R)-lactate + A = pyruvate + AH2. In vitro the glycolate oxidase activity is inhibited by the sulfhydryl inhibitors CuSO4 and PCMB, by KCN, but not by the metal complexing agent EDTA. Functionally, component of a complex that catalyzes the oxidation of glycolate to glyoxylate. Is required for E.coli to grow on glycolate as a sole source of carbon. Is also able to oxidize D-lactate ((R)-lactate) with a similar rate. Does not link directly to O(2), and 2,6-dichloroindophenol (DCIP) and phenazine methosulfate (PMS) can act as artificial electron acceptors in vitro, but the physiological molecule that functions as a primary electron acceptor during glycolate oxidation is unknown. The sequence is that of Glycolate oxidase subunit GlcE from Escherichia coli (strain K12).